The primary structure comprises 247 residues: Uridylate kinase (247 aa).

16–19 contributes to the ATP binding site; it reads KLSG. Residue Gly58 participates in UMP binding. Residues Gly59 and Arg63 each coordinate ATP. Residues Asp78 and 139-146 each bind UMP; that span reads TGNPFFTT. ATP is bound by residues Thr166, Tyr172, and Asp175.

Belongs to the UMP kinase family. In terms of assembly, homohexamer.

Its subcellular location is the cytoplasm. It carries out the reaction UMP + ATP = UDP + ADP. The protein operates within pyrimidine metabolism; CTP biosynthesis via de novo pathway; UDP from UMP (UMPK route): step 1/1. With respect to regulation, inhibited by UTP. In terms of biological role, catalyzes the reversible phosphorylation of UMP to UDP. This Xylella fastidiosa (strain Temecula1 / ATCC 700964) protein is Uridylate kinase.